A 47-amino-acid chain; its full sequence is PhoP/PhoQ regulator MgrB (47 aa).

The chain crosses the membrane as a helical span at residues 6–26 (WVLLIVIIAGCLLLWTQMLNV).

Belongs to the MgrB family. May form homooligomers. Probably interacts with the periplasmic domain of PhoQ.

Its subcellular location is the cell inner membrane. PhoP-regulated transcription is redox-sensitive, being activated when the periplasm becomes more reducing. MgrB acts between DsbA/DsbB and PhoP/PhoQ in this pathway. Represses PhoP/PhoQ signaling, possibly by binding to the periplasmic domain of PhoQ, altering its activity and that of downstream effector PhoP. The chain is PhoP/PhoQ regulator MgrB from Klebsiella pneumoniae (strain 342).